The chain runs to 410 residues: Mating-type locus allele B7 protein (410 aa).

Residues 1-110 (MSSDPNFSLT…VNVGSPAVGC (110 aa)) form a variable domain between B alleles region. The segment at residues 107–184 (AVGCRNLSED…NARRRSGWSH (78 aa)) is a DNA-binding region (homeobox; TALE-type). The segment at 111-410 (RNLSEDLPAY…PFLCLSVAFV (300 aa)) is highly conserved between B alleles. Disordered stretches follow at residues 202 to 225 (RAKLSSSTQSSPPSPMPEYPSNNL), 278 to 336 (TPKP…PELS), and 374 to 394 (ARGNRKVKALPKRAGKQQPDE). The short motif at 276–308 (KKTPKPGMPRPVTTVAKRQPARKTKPAAKPNSR) is the Nuclear localization signal element. Residues 306–336 (NSRTANPRASTTPSIDSTLDSSKLESTPELS) are compositionally biased toward polar residues. Residues 333–410 (PELSMCSTAD…PFLCLSVAFV (78 aa)) form a not essential for B7 function region. The span at 375–388 (RGNRKVKALPKRAG) shows a compositional bias: basic residues.

Belongs to the TALE/M-ATYP homeobox family.

The protein resides in the nucleus. Functionally, the B locus has at least 25 alleles, and any combination of two different B alleles yields a multimeric regulatory protein, that activates genes responsible for the pathogenicity and for the sexual development of the fungus within the corn plant. The polypeptide is Mating-type locus allele B7 protein (Mycosarcoma maydis (Corn smut fungus)).